The primary structure comprises 54 residues: MNSKQILSLSAFAMTIATAAAGNWNAGDTIALLIGIAMFFVLLLALLGWISRKK.

A signal peptide spans Met1–Ala21. Topologically, residues Gly22–Thr29 are extracellular. The helical transmembrane segment at Ile30–Ile50 threads the bilayer. Residues Ser51–Lys54 lie on the Cytoplasmic side of the membrane.

It is found in the membrane. This is an uncharacterized protein from Dictyostelium discoideum (Social amoeba).